A 411-amino-acid chain; its full sequence is Tubulin beta-2 chain (411 aa).

The GTP site is built by Glu37, Ser106, Gly110, Thr111, Gly112, Asn172, and Asn194. A Mg(2+)-binding site is contributed by Glu37. The disordered stretch occupies residues 392–411 (QYQDATAEPEGXYEEDYDEA). Residues 402-411 (GXYEEDYDEA) show a composition bias toward acidic residues.

It belongs to the tubulin family. Dimer of alpha and beta chains. A typical microtubule is a hollow water-filled tube with an outer diameter of 25 nm and an inner diameter of 15 nM. Alpha-beta heterodimers associate head-to-tail to form protofilaments running lengthwise along the microtubule wall with the beta-tubulin subunit facing the microtubule plus end conferring a structural polarity. Microtubules usually have 13 protofilaments but different protofilament numbers can be found in some organisms and specialized cells. Requires Mg(2+) as cofactor.

It localises to the cytoplasm. The protein localises to the cytoskeleton. Functionally, tubulin is the major constituent of microtubules, a cylinder consisting of laterally associated linear protofilaments composed of alpha- and beta-tubulin heterodimers. Microtubules grow by the addition of GTP-tubulin dimers to the microtubule end, where a stabilizing cap forms. Below the cap, tubulin dimers are in GDP-bound state, owing to GTPase activity of alpha-tubulin. The sequence is that of Tubulin beta-2 chain (TUBB2) from Anemia phyllitidis (Fern).